The following is a 244-amino-acid chain: Protein-L-isoaspartate O-methyltransferase 2 (244 aa).

The active site involves Ser-88.

It belongs to the methyltransferase superfamily. L-isoaspartyl/D-aspartyl protein methyltransferase family.

The protein resides in the cytoplasm. It catalyses the reaction [protein]-L-isoaspartate + S-adenosyl-L-methionine = [protein]-L-isoaspartate alpha-methyl ester + S-adenosyl-L-homocysteine. Catalyzes the methyl esterification of L-isoaspartyl residues in peptides and proteins that result from spontaneous decomposition of normal L-aspartyl and L-asparaginyl residues. It plays a role in the repair and/or degradation of damaged proteins. In Shewanella sediminis (strain HAW-EB3), this protein is Protein-L-isoaspartate O-methyltransferase 2.